Reading from the N-terminus, the 304-residue chain is Voltage-dependent anion channel-forming protein YneE (304 aa).

4 consecutive transmembrane segments (helical) span residues 28–48, 50–70, 209–229, and 235–255; these read LLLN…YTML, IKFT…FLGF, AYTL…PFAL, and YMTP…DALA.

The protein belongs to the anion channel-forming bestrophin (TC 1.A.46) family.

Its subcellular location is the cell membrane. The sequence is that of Voltage-dependent anion channel-forming protein YneE (yneE) from Salmonella typhi.